Reading from the N-terminus, the 129-residue chain is Small ribosomal subunit protein uS11 (129 aa).

Belongs to the universal ribosomal protein uS11 family. Part of the 30S ribosomal subunit. Interacts with proteins S7 and S18. Binds to IF-3.

Functionally, located on the platform of the 30S subunit, it bridges several disparate RNA helices of the 16S rRNA. Forms part of the Shine-Dalgarno cleft in the 70S ribosome. In Methylobacterium radiotolerans (strain ATCC 27329 / DSM 1819 / JCM 2831 / NBRC 15690 / NCIMB 10815 / 0-1), this protein is Small ribosomal subunit protein uS11.